The sequence spans 398 residues: Acetate kinase (398 aa).

A Mg(2+)-binding site is contributed by N7. K14 is an ATP binding site. R91 provides a ligand contact to substrate. Catalysis depends on D148, which acts as the Proton donor/acceptor. Residues H208–G212, D283–R285, and G331–N335 each bind ATP. Residue E385 participates in Mg(2+) binding.

This sequence belongs to the acetokinase family. Homodimer. It depends on Mg(2+) as a cofactor. Mn(2+) serves as cofactor.

It localises to the cytoplasm. The catalysed reaction is acetate + ATP = acetyl phosphate + ADP. It participates in metabolic intermediate biosynthesis; acetyl-CoA biosynthesis; acetyl-CoA from acetate: step 1/2. In terms of biological role, catalyzes the formation of acetyl phosphate from acetate and ATP. Can also catalyze the reverse reaction. The chain is Acetate kinase from Porphyromonas gingivalis (strain ATCC BAA-308 / W83).